The primary structure comprises 416 residues: Tyrosine--tRNA ligase (416 aa).

Tyr-40 serves as a coordination point for L-tyrosine. Positions 45-54 (ATAKSLHVGS) match the 'HIGH' region motif. Residues Tyr-177 and Gln-181 each coordinate L-tyrosine. The 'KMSKS' region signature appears at 237-241 (KMGKS). Lys-240 is an ATP binding site. The S4 RNA-binding domain occupies 351-415 (ISIVQLIVKS…GKKRHAMVQL (65 aa)).

The protein belongs to the class-I aminoacyl-tRNA synthetase family. TyrS type 1 subfamily. As to quaternary structure, homodimer.

It localises to the cytoplasm. It catalyses the reaction tRNA(Tyr) + L-tyrosine + ATP = L-tyrosyl-tRNA(Tyr) + AMP + diphosphate + H(+). In terms of biological role, catalyzes the attachment of tyrosine to tRNA(Tyr) in a two-step reaction: tyrosine is first activated by ATP to form Tyr-AMP and then transferred to the acceptor end of tRNA(Tyr). This chain is Tyrosine--tRNA ligase, found in Roseobacter denitrificans (strain ATCC 33942 / OCh 114) (Erythrobacter sp. (strain OCh 114)).